We begin with the raw amino-acid sequence, 514 residues long: GMP synthase [glutamine-hydrolyzing] (514 aa).

The Glutamine amidotransferase type-1 domain occupies 9-199 (MILVLDFGGQ…LFEVCQCTGD (191 aa)). Cys86 functions as the Nucleophile in the catalytic mechanism. Active-site residues include His173 and Glu175. In terms of domain architecture, GMPS ATP-PPase spans 200–389 (WSMENFIEIE…LGLSDEIVWR (190 aa)). ATP is bound at residue 227–233 (SGGVDSS).

Homodimer.

The enzyme catalyses XMP + L-glutamine + ATP + H2O = GMP + L-glutamate + AMP + diphosphate + 2 H(+). Its pathway is purine metabolism; GMP biosynthesis; GMP from XMP (L-Gln route): step 1/1. In terms of biological role, catalyzes the synthesis of GMP from XMP. This chain is GMP synthase [glutamine-hydrolyzing], found in Exiguobacterium sibiricum (strain DSM 17290 / CCUG 55495 / CIP 109462 / JCM 13490 / 255-15).